The chain runs to 130 residues: Small ribosomal subunit protein uS8 (130 aa).

It belongs to the universal ribosomal protein uS8 family. Component of the small ribosomal subunit (SSU). Mature N.crassa ribosomes consist of a small (40S) and a large (60S) subunit. The 40S small subunit contains 1 molecule of ribosomal RNA (18S rRNA) and at least 32 different proteins. The large 60S subunit contains 3 rRNA molecules (26S, 5.8S and 5S rRNA) and at least 42 different proteins.

Its subcellular location is the cytoplasm. Its function is as follows. Component of the ribosome, a large ribonucleoprotein complex responsible for the synthesis of proteins in the cell. The small ribosomal subunit (SSU) binds messenger RNAs (mRNAs) and translates the encoded message by selecting cognate aminoacyl-transfer RNA (tRNA) molecules. The large subunit (LSU) contains the ribosomal catalytic site termed the peptidyl transferase center (PTC), which catalyzes the formation of peptide bonds, thereby polymerizing the amino acids delivered by tRNAs into a polypeptide chain. The nascent polypeptides leave the ribosome through a tunnel in the LSU and interact with protein factors that function in enzymatic processing, targeting, and the membrane insertion of nascent chains at the exit of the ribosomal tunnel. The chain is Small ribosomal subunit protein uS8 (crp-27) from Neurospora crassa (strain ATCC 24698 / 74-OR23-1A / CBS 708.71 / DSM 1257 / FGSC 987).